A 604-amino-acid polypeptide reads, in one-letter code: MRSHSCGDLRSDAIDSTVLLSGWVDRRRDHGGVIFIDLRDRSGTVQITVDPDLGAEAFAVAEHLRNETVLQVEGRVRARPDESRNERLATGEVEVLAQRLKVLNAPSRNLPFAVSVHDDEQVREELRLRHRYLDLRRERMRRNLSLRHQTVQTARRFLEDEGFIEVETPVLTRSTPEGARDYLVPSRVCGGEWFALPQSPQLFKQLLMVGGLERYYQVARCFRDEDLRADRQPEFTQLDMEMSFLDQEQILDLNERLIGRIWKLVKGVELSLPLPRMTWHEAMERYGTDRPDTRYGMELVGVSDIVADMGFKVFSGAVAAGGSVKCITVPGGNDKVSNVRIKPGGDVFSEAQKAGAGGLAFIRVRDGGEIDTIGAIKDNLSDEKKAQLLQRTGAEPGSLILFGAGDTATVNKALDRVRQYLAKELEMVPAEAWNFLWVVDFPMFEFNADENRLEALHHPFCAANPEDLGDDPALWSERLPTARAQAYDLVLNGLELGGGSLRIHDAALQNQVLQTIGLAQEEAQEQFGFLLEALEMGAPPHGGIAFGLDRMVMLLAGEESIRDTIAFPKTQQARCLMTSAPGGASDKQLEELHVASTWVEPEEN.

Glutamate 177 lines the L-aspartate pocket. An aspartate region spans residues 201–204 (QLFK). Arginine 223 serves as a coordination point for L-aspartate. ATP contacts are provided by residues 223–225 (RDE) and glutamine 232. Histidine 457 is a binding site for L-aspartate. Glutamate 495 is an ATP binding site. Residue arginine 502 participates in L-aspartate binding. 547–550 (GLDR) contacts ATP.

The protein belongs to the class-II aminoacyl-tRNA synthetase family. Type 1 subfamily. In terms of assembly, homodimer.

The protein localises to the cytoplasm. It carries out the reaction tRNA(Asx) + L-aspartate + ATP = L-aspartyl-tRNA(Asx) + AMP + diphosphate. Aspartyl-tRNA synthetase with relaxed tRNA specificity since it is able to aspartylate not only its cognate tRNA(Asp) but also tRNA(Asn). Reaction proceeds in two steps: L-aspartate is first activated by ATP to form Asp-AMP and then transferred to the acceptor end of tRNA(Asp/Asn). The chain is Aspartate--tRNA(Asp/Asn) ligase from Synechococcus sp. (strain RCC307).